The chain runs to 258 residues: Tryptophan synthase alpha chain (258 aa).

Residues glutamate 47 and aspartate 58 each act as proton acceptor in the active site.

It belongs to the TrpA family. In terms of assembly, tetramer of two alpha and two beta chains.

The enzyme catalyses (1S,2R)-1-C-(indol-3-yl)glycerol 3-phosphate + L-serine = D-glyceraldehyde 3-phosphate + L-tryptophan + H2O. It functions in the pathway amino-acid biosynthesis; L-tryptophan biosynthesis; L-tryptophan from chorismate: step 5/5. The alpha subunit is responsible for the aldol cleavage of indoleglycerol phosphate to indole and glyceraldehyde 3-phosphate. The sequence is that of Tryptophan synthase alpha chain from Bacillus cereus (strain G9842).